The chain runs to 1578 residues: Mediator of RNA polymerase II transcription subunit 14 (1578 aa).

The LXXLL motif 1 signature appears at 49-53 (LAELL). The interval 561-582 (SQSVTAGGTSQSSAPSAATTES) is disordered. Residues 565-580 (TAGGTSQSSAPSAATT) show a composition bias toward low complexity. The LXXLL motif 2 motif lies at 739-743 (LKRLL). Disordered regions lie at residues 1009 to 1173 (RRRS…PDHK) and 1510 to 1578 (APGG…GGPN). Over residues 1084–1093 (SQSHPNFNMT) the composition is skewed to polar residues. Composition is skewed to pro residues over residues 1095 to 1104 (PPAPHMPHPS) and 1157 to 1167 (PGMPRPSPRPG). 2 stretches are compositionally biased toward gly residues: residues 1510–1521 (APGGPGGPGPMG) and 1547–1578 (MGGG…GGPN).

This sequence belongs to the Mediator complex subunit 14 family. In terms of assembly, component of the Mediator complex.

It localises to the nucleus. Component of the Mediator complex, a coactivator involved in the regulated transcription of nearly all RNA polymerase II-dependent genes. Mediator functions as a bridge to convey information from gene-specific regulatory proteins to the basal RNA polymerase II transcription machinery. Mediator is recruited to promoters by direct interactions with regulatory proteins and serves as a scaffold for the assembly of a functional preinitiation complex with RNA polymerase II and the general transcription factors. The protein is Mediator of RNA polymerase II transcription subunit 14 (MED14) of Aedes aegypti (Yellowfever mosquito).